Here is a 667-residue protein sequence, read N- to C-terminus: WD repeat-containing protein 48 homolog (667 aa).

WD repeat units lie at residues 26 to 65 (QHRN…NEKY), 71 to 110 (HHND…CMST), 113 to 152 (THRD…ALTA), 164 to 203 (GSKD…RSMK), 206 to 245 (GHTE…CVQT), 248 to 287 (VHKE…NKML), 290 to 329 (EEQA…RCTL), and 350 to 389 (KGGA…KKEQ). The tract at residues 591–615 (ETTPSGGNANNSLQNSQSDANSEGS) is disordered.

Belongs to the WD repeat WDR48 family. In terms of assembly, catalytic component of the Usp12-46 deubiquitylase complex consisting of Usp12-46, Wdr20 and Uaf1; regulatory subunit that, together wtih Wdr20, stabilizes Usp12-46. The Usp12-46 deubiquitylase complex associates with arr/arrow; the interaction leads to deubiquitination and stabilization of arr/arrow.

In terms of biological role, regulatory component of the Usp12-46 deubiquitylase complex. activates deubiquitination by increasing the catalytic turnover without increasing the affinity of deubiquitinating enzymes for the substrate. The complex deubiquitylates the wg/wingless-signaling receptor arr/arrow, which stabilizes the receptor and increases its concentration at the cell surface; this enhances the sensitivity of cells to wg/wingless-signal stimulation. This increases the amplitude and spatial range of the signaling response to the wg/wingless morphogen gradient, facilitating the precise concentration-dependent regulation of its target genes. Together with Wdr20 and Usp12-46 required for wg/wingless-mediated signaling in the wing imaginal disc and for wg/wingless-dependent regulation of intestinal stem cell proliferation. The chain is WD repeat-containing protein 48 homolog from Drosophila ananassae (Fruit fly).